A 278-amino-acid chain; its full sequence is Energy-coupling factor transporter ATP-binding protein EcfA (278 aa).

The ABC transporter domain occupies 5–240; it reads LETKNLVYNY…KEVIDEADLR (236 aa). 38–45 provides a ligand contact to ATP; it reads GHNGAGKS.

It belongs to the ABC transporter superfamily. Energy-coupling factor EcfA family. In terms of assembly, forms a stable energy-coupling factor (ECF) transporter complex composed of 2 membrane-embedded substrate-binding proteins (S component), 2 ATP-binding proteins (A component) and 2 transmembrane proteins (T component).

It is found in the cell membrane. Functionally, ATP-binding (A) component of a common energy-coupling factor (ECF) ABC-transporter complex. Unlike classic ABC transporters this ECF transporter provides the energy necessary to transport a number of different substrates. In Methanosphaera stadtmanae (strain ATCC 43021 / DSM 3091 / JCM 11832 / MCB-3), this protein is Energy-coupling factor transporter ATP-binding protein EcfA.